Consider the following 209-residue polypeptide: Large ribosomal subunit protein uL3 (209 aa).

A disordered region spans residues 133-152; it reads THGNSLSHRVPGSIGQNQTP. N5-methylglutamine is present on Gln-150.

This sequence belongs to the universal ribosomal protein uL3 family. As to quaternary structure, part of the 50S ribosomal subunit. Forms a cluster with proteins L14 and L19. Post-translationally, methylated by PrmB.

One of the primary rRNA binding proteins, it binds directly near the 3'-end of the 23S rRNA, where it nucleates assembly of the 50S subunit. The sequence is that of Large ribosomal subunit protein uL3 from Sodalis glossinidius (strain morsitans).